A 252-amino-acid chain; its full sequence is Acetoacetate decarboxylase (252 aa).

Catalysis depends on Lys116, which acts as the Schiff-base intermediate with acetoacetate.

Belongs to the ADC family.

The catalysed reaction is acetoacetate + H(+) = acetone + CO2. Its function is as follows. Catalyzes the conversion of acetoacetate to acetone and carbon dioxide. This Paraburkholderia xenovorans (strain LB400) protein is Acetoacetate decarboxylase.